A 61-amino-acid chain; its full sequence is U-stichotoxin-Hcr1a (61 aa).

The signal sequence occupies residues 1-21 (MKPAIFLMLFVAMFLISEGEG). Positions 22–31 (FKPKDAPQER) are excised as a propeptide. Pro36 carries the post-translational modification Hydroxyproline. 2 disulfide bridges follow: Cys41-Cys53 and Cys44-Cys59.

The protein belongs to the Hau1a/HC18/HC19 family.

Its subcellular location is the secreted. The protein resides in the nematocyst. Its function is as follows. Toxin that is lethal to crab. Does not produce the typical symptoms associated with sodium channel toxins in crabs, suggesting that it likely does not act on sodium channels. The chain is U-stichotoxin-Hcr1a from Radianthus crispa (Leathery sea anemone).